Reading from the N-terminus, the 391-residue chain is Cilia- and flagella-associated protein 263 (391 aa).

The tract at residues methionine 1–leucine 21 is disordered. Coiled coils occupy residues leucine 95–leucine 243 and leucine 294–tyrosine 369.

This sequence belongs to the CFAP263 family. As to quaternary structure, forms a complex with CFAP184; the interaction is required for functional activity in cilia. Interacts with HAP1 and PCM1.

It localises to the cytoplasm. Its subcellular location is the cytoskeleton. The protein localises to the microtubule organizing center. It is found in the centrosome. The protein resides in the centriolar satellite. It localises to the cell projection. Its subcellular location is the cilium. Functionally, component of centriolar satellites contributing to primary cilium formation. In complex with CFAP263, acts as a regulator of ciliary beating that connects radial spoke 3 (RS3) to the inner dynein arm (IDA) and the nexin-dynein regulatory complex (N-DRC). The complex is positioned parallel to N-DRC and forms a connection between the arch at the base of RS3, the IDA tail and N-DRC. The chain is Cilia- and flagella-associated protein 263 (CFAP263) from Bos taurus (Bovine).